The sequence spans 769 residues: CO(2)-response secreted protease (769 aa).

Residues 1 to 27 form the signal peptide; sequence MKGITFFTPFLSFLYLLCILFMTETEA. The region spanning 35-108 is the Inhibitor I9 domain; the sequence is VYIVYMGSAS…VFPDPHFQLH (74 aa). The Peptidase S8 domain maps to 112–613; the sequence is SWDFLKYQTS…AGELSSTASM (502 aa). Catalysis depends on charge relay system residues Asp145 and His210. One can recognise a PA domain in the interval 381 to 465; it reads ADASEGSARA…SKEAAEIFSY (85 aa). Ser546 functions as the Charge relay system in the catalytic mechanism.

It belongs to the peptidase S8 family. Expressed in roots, guard cells and meristemoid and pavement cells.

The protein localises to the secreted. The protein resides in the cell wall. The enzyme catalyses Release of an N-terminal tripeptide from a polypeptide.. In terms of biological role, mediates CO(2)-controlled stomatal development by cleaving peptide EPF2 (AC Q8LC53). Not active on peptides EPF1 (AC Q8S8I4) or stomagen (AC Q9SV72). The protein is CO(2)-response secreted protease of Arabidopsis thaliana (Mouse-ear cress).